The chain runs to 328 residues: Malate dehydrogenase (328 aa).

11–17 is a binding site for NAD(+); it reads GAAGQIG. Substrate contacts are provided by R94 and R100. Residues N107, Q114, and 131 to 133 contribute to the NAD(+) site; that span reads VGN. Substrate is bound by residues N133 and R164. The active-site Proton acceptor is H189.

Belongs to the LDH/MDH superfamily. MDH type 2 family.

It catalyses the reaction (S)-malate + NAD(+) = oxaloacetate + NADH + H(+). Its function is as follows. Catalyzes the reversible oxidation of malate to oxaloacetate. This Stenotrophomonas maltophilia (strain R551-3) protein is Malate dehydrogenase.